A 244-amino-acid chain; its full sequence is Triosephosphate isomerase (244 aa).

9-11 is a substrate binding site; it reads NWK. H93 (electrophile) is an active-site residue. E160 acts as the Proton acceptor in catalysis. Positions 166 and 206 each coordinate substrate.

Belongs to the triosephosphate isomerase family. As to quaternary structure, homodimer.

It localises to the cytoplasm. It carries out the reaction D-glyceraldehyde 3-phosphate = dihydroxyacetone phosphate. It participates in carbohydrate biosynthesis; gluconeogenesis. The protein operates within carbohydrate degradation; glycolysis; D-glyceraldehyde 3-phosphate from glycerone phosphate: step 1/1. In terms of biological role, involved in the gluconeogenesis. Catalyzes stereospecifically the conversion of dihydroxyacetone phosphate (DHAP) to D-glyceraldehyde-3-phosphate (G3P). In Mycoplasma pneumoniae (strain ATCC 29342 / M129 / Subtype 1) (Mycoplasmoides pneumoniae), this protein is Triosephosphate isomerase.